Here is a 159-residue protein sequence, read N- to C-terminus: 2-C-methyl-D-erythritol 2,4-cyclodiphosphate synthase (159 aa).

Residues D10 and H12 each coordinate a divalent metal cation. 4-CDP-2-C-methyl-D-erythritol 2-phosphate-binding positions include 10-12 (DVH) and 36-37 (HS). H44 lines the a divalent metal cation pocket. 4-CDP-2-C-methyl-D-erythritol 2-phosphate-binding positions include 58-60 (DIG), 63-67 (FSDTD), and R144.

This sequence belongs to the IspF family. Homotrimer. It depends on a divalent metal cation as a cofactor.

The enzyme catalyses 4-CDP-2-C-methyl-D-erythritol 2-phosphate = 2-C-methyl-D-erythritol 2,4-cyclic diphosphate + CMP. It participates in isoprenoid biosynthesis; isopentenyl diphosphate biosynthesis via DXP pathway; isopentenyl diphosphate from 1-deoxy-D-xylulose 5-phosphate: step 4/6. Functionally, involved in the biosynthesis of isopentenyl diphosphate (IPP) and dimethylallyl diphosphate (DMAPP), two major building blocks of isoprenoid compounds. Catalyzes the conversion of 4-diphosphocytidyl-2-C-methyl-D-erythritol 2-phosphate (CDP-ME2P) to 2-C-methyl-D-erythritol 2,4-cyclodiphosphate (ME-CPP) with a corresponding release of cytidine 5-monophosphate (CMP). The sequence is that of 2-C-methyl-D-erythritol 2,4-cyclodiphosphate synthase from Paraburkholderia phytofirmans (strain DSM 17436 / LMG 22146 / PsJN) (Burkholderia phytofirmans).